The primary structure comprises 395 residues: Elongation factor Tu (395 aa).

One can recognise a tr-type G domain in the interval 10 to 205; it reads KPHVNVGTIG…VDNDIPIPPR (196 aa). A G1 region spans residues 19–26; sequence GHVDHGKT. A GTP-binding site is contributed by 19-26; that stretch reads GHVDHGKT. Thr-26 contacts Mg(2+). The segment at 60–64 is G2; sequence GITIN. The segment at 81-84 is G3; the sequence is DCPG. GTP contacts are provided by residues 81-85 and 136-139; these read DCPGH and NKVD. The interval 136-139 is G4; it reads NKVD. The tract at residues 174–176 is G5; it reads SAL.

The protein belongs to the TRAFAC class translation factor GTPase superfamily. Classic translation factor GTPase family. EF-Tu/EF-1A subfamily. As to quaternary structure, monomer.

Its subcellular location is the cytoplasm. It catalyses the reaction GTP + H2O = GDP + phosphate + H(+). In terms of biological role, GTP hydrolase that promotes the GTP-dependent binding of aminoacyl-tRNA to the A-site of ribosomes during protein biosynthesis. This Cytophaga hutchinsonii (strain ATCC 33406 / DSM 1761 / CIP 103989 / NBRC 15051 / NCIMB 9469 / D465) protein is Elongation factor Tu.